Consider the following 303-residue polypeptide: Protoheme IX farnesyltransferase 2 (303 aa).

9 consecutive transmembrane segments (helical) span residues valine 29–valine 49, leucine 51–phenylalanine 71, isoleucine 96–threonine 118, leucine 123–leucine 143, asparagine 150–threonine 170, alanine 177–isoleucine 197, cysteine 223–methionine 243, cysteine 244–tryptophan 264, and phenylalanine 281–valine 301.

It belongs to the UbiA prenyltransferase family. Protoheme IX farnesyltransferase subfamily.

It is found in the cell inner membrane. It carries out the reaction heme b + (2E,6E)-farnesyl diphosphate + H2O = Fe(II)-heme o + diphosphate. Its pathway is porphyrin-containing compound metabolism; heme O biosynthesis; heme O from protoheme: step 1/1. In terms of biological role, converts heme B (protoheme IX) to heme O by substitution of the vinyl group on carbon 2 of heme B porphyrin ring with a hydroxyethyl farnesyl side group. The polypeptide is Protoheme IX farnesyltransferase 2 (Shewanella frigidimarina (strain NCIMB 400)).